The sequence spans 240 residues: Endonuclease V (240 aa).

2 residues coordinate Mg(2+): aspartate 46 and aspartate 116.

It belongs to the endonuclease V family. It depends on Mg(2+) as a cofactor.

It localises to the cytoplasm. It catalyses the reaction Endonucleolytic cleavage at apurinic or apyrimidinic sites to products with a 5'-phosphate.. DNA repair enzyme involved in the repair of deaminated bases. Selectively cleaves double-stranded DNA at the second phosphodiester bond 3' to a deoxyinosine leaving behind the intact lesion on the nicked DNA. This chain is Endonuclease V, found in Rhodospirillum centenum (strain ATCC 51521 / SW).